A 212-amino-acid polypeptide reads, in one-letter code: ATP phosphoribosyltransferase (212 aa).

This sequence belongs to the ATP phosphoribosyltransferase family. Short subfamily. As to quaternary structure, heteromultimer composed of HisG and HisZ subunits.

It localises to the cytoplasm. It catalyses the reaction 1-(5-phospho-beta-D-ribosyl)-ATP + diphosphate = 5-phospho-alpha-D-ribose 1-diphosphate + ATP. It functions in the pathway amino-acid biosynthesis; L-histidine biosynthesis; L-histidine from 5-phospho-alpha-D-ribose 1-diphosphate: step 1/9. Catalyzes the condensation of ATP and 5-phosphoribose 1-diphosphate to form N'-(5'-phosphoribosyl)-ATP (PR-ATP). Has a crucial role in the pathway because the rate of histidine biosynthesis seems to be controlled primarily by regulation of HisG enzymatic activity. The sequence is that of ATP phosphoribosyltransferase from Clostridium novyi (strain NT).